A 195-amino-acid chain; its full sequence is Imidazoleglycerol-phosphate dehydratase (195 aa).

This sequence belongs to the imidazoleglycerol-phosphate dehydratase family.

It localises to the cytoplasm. It catalyses the reaction D-erythro-1-(imidazol-4-yl)glycerol 3-phosphate = 3-(imidazol-4-yl)-2-oxopropyl phosphate + H2O. The protein operates within amino-acid biosynthesis; L-histidine biosynthesis; L-histidine from 5-phospho-alpha-D-ribose 1-diphosphate: step 6/9. In Cereibacter sphaeroides (strain ATCC 17029 / ATH 2.4.9) (Rhodobacter sphaeroides), this protein is Imidazoleglycerol-phosphate dehydratase.